A 1011-amino-acid chain; its full sequence is Cell division cycle-associated protein 2 (1011 aa).

Positions 1–22 are enriched in polar residues; the sequence is MDTCSQESEPLQTKESPINNAG. The segment at 1–26 is disordered; it reads MDTCSQESEPLQTKESPINNAGKTPL. Residues Ser-125, Ser-130, Ser-209, Ser-293, and Ser-310 each carry the phosphoserine modification. Thr-313 carries the post-translational modification Phosphothreonine. The 61-residue stretch at 380-440 folds into the PP1-binding domain; it reads KRKRVTFGED…PEWLPQPNFD (61 aa). A phosphoserine mark is found at Ser-391 and Ser-398. 2 disordered regions span residues 395 to 438 and 522 to 544; these read LDES…PQPN and PCKEKKTNRRKSQESKHADKVLP. A Phosphothreonine modification is found at Thr-403. Positions 418–431 are enriched in low complexity; sequence SSLSPPLLEQSPVP. Ser-428 carries the post-translational modification Phosphoserine. Residues 522–543 are compositionally biased toward basic and acidic residues; the sequence is PCKEKKTNRRKSQESKHADKVL. Phosphoserine occurs at positions 583, 702, and 747. Residue Lys-753 forms a Glycyl lysine isopeptide (Lys-Gly) (interchain with G-Cter in SUMO2) linkage. Over residues 790–803 the composition is skewed to basic and acidic residues; the sequence is DQRKVSKSQGEDLG. 2 disordered regions span residues 790-835 and 896-1011; these read DQRK…GLHL and GLVW…LSEN. Residues 931 to 945 show a composition bias toward polar residues; sequence SSRQDPCTLPSTSSE. Ser-967 is subject to Phosphoserine. The span at 968–983 shows a compositional bias: polar residues; sequence FCTSTLANPKSTTQSR. A compositionally biased stretch (basic and acidic residues) spans 993-1011; the sequence is QKRENTLQETSRESDLSEN.

In terms of assembly, interacts with PPP1CC. Phosphorylated by CDK1. May regulate its subcellular location.

Its subcellular location is the nucleus. In terms of biological role, regulator of chromosome structure during mitosis required for condensin-depleted chromosomes to retain their compact architecture through anaphase. Acts by mediating the recruitment of phopsphatase PP1-gamma subunit (PPP1CC) to chromatin at anaphase and into the following interphase. At anaphase onset, its association with chromatin targets a pool of PPP1CC to dephosphorylate substrates. The sequence is that of Cell division cycle-associated protein 2 (CDCA2) from Bos taurus (Bovine).